We begin with the raw amino-acid sequence, 163 residues long: Crossover junction endodeoxyribonuclease RuvC (163 aa).

Residues D7, E66, and D139 contribute to the active site. 3 residues coordinate Mg(2+): D7, E66, and D139.

This sequence belongs to the RuvC family. In terms of assembly, homodimer which binds Holliday junction (HJ) DNA. The HJ becomes 2-fold symmetrical on binding to RuvC with unstacked arms; it has a different conformation from HJ DNA in complex with RuvA. In the full resolvosome a probable DNA-RuvA(4)-RuvB(12)-RuvC(2) complex forms which resolves the HJ. Requires Mg(2+) as cofactor.

Its subcellular location is the cytoplasm. It catalyses the reaction Endonucleolytic cleavage at a junction such as a reciprocal single-stranded crossover between two homologous DNA duplexes (Holliday junction).. Its function is as follows. The RuvA-RuvB-RuvC complex processes Holliday junction (HJ) DNA during genetic recombination and DNA repair. Endonuclease that resolves HJ intermediates. Cleaves cruciform DNA by making single-stranded nicks across the HJ at symmetrical positions within the homologous arms, yielding a 5'-phosphate and a 3'-hydroxyl group; requires a central core of homology in the junction. The consensus cleavage sequence is 5'-(A/T)TT(C/G)-3'. Cleavage occurs on the 3'-side of the TT dinucleotide at the point of strand exchange. HJ branch migration catalyzed by RuvA-RuvB allows RuvC to scan DNA until it finds its consensus sequence, where it cleaves and resolves the cruciform DNA. This is Crossover junction endodeoxyribonuclease RuvC from Thermomicrobium roseum (strain ATCC 27502 / DSM 5159 / P-2).